The primary structure comprises 113 residues: U11-theraphotoxin-Hhn1h (113 aa).

The signal sequence occupies residues 1 to 21; the sequence is MNTVRVTFLLVFVLVVSLGQA. Residues 22-74 constitute a propeptide that is removed on maturation; that stretch reads DKDENRMEMQEKTEQGKSYLDFAENLLLQKLEELEAKLLEEDSEESRNSRQKR. The disordered stretch occupies residues 61 to 83; that stretch reads EEDSEESRNSRQKRRIGEGVPCD. 2 disulfides stabilise this stretch: Cys82–Cys95 and Cys89–Cys110.

This sequence belongs to the neurotoxin 14 (magi-1) family. 01 (HNTX-16) subfamily. Expressed by the venom gland.

The protein resides in the secreted. In terms of biological role, probable ion channel inhibitor. This is U11-theraphotoxin-Hhn1h from Cyriopagopus hainanus (Chinese bird spider).